The following is a 175-amino-acid chain: Large ribosomal subunit protein uL10 (175 aa).

Belongs to the universal ribosomal protein uL10 family. As to quaternary structure, part of the ribosomal stalk of the 50S ribosomal subunit. The N-terminus interacts with L11 and the large rRNA to form the base of the stalk. The C-terminus forms an elongated spine to which L12 dimers bind in a sequential fashion forming a multimeric L10(L12)X complex.

Its function is as follows. Forms part of the ribosomal stalk, playing a central role in the interaction of the ribosome with GTP-bound translation factors. The protein is Large ribosomal subunit protein uL10 of Psychrobacter cryohalolentis (strain ATCC BAA-1226 / DSM 17306 / VKM B-2378 / K5).